We begin with the raw amino-acid sequence, 119 residues long: MKNIAYEGRLFLISAVQFMPDATAMGFGEIIDQATGKRKLPGWPSADDNCINGGSVIIDPYGEIIAGPLLGQEGLLTAEINTDLIAEARFDLDPVGHYARGDVFQLTVNERSHDVKFTK.

The 82-residue stretch at 1 to 82 (MKNIAYEGRL…EGLLTAEINT (82 aa)) folds into the CN hydrolase domain. The active-site Proton acceptor is Asp-21.

The protein belongs to the carbon-nitrogen hydrolase superfamily. Nitrilase family.

The protein is Putative nitrilase-like protein YIL165C of Saccharomyces cerevisiae (strain ATCC 204508 / S288c) (Baker's yeast).